A 133-amino-acid chain; its full sequence is MGKPATKPAPKPSKQQDDKKSDLQQELVLQRLYDTVQSRRGTDPSLSHSARLMARGRNKIAQKFGEEAVECLIEAVNGNRKELIGESADVLYHLIVMWVDAGVSPEDVWTELKRREGTSGIAEKAARPKEKLG.

The segment at Met1–Asp22 is disordered.

The protein belongs to the PRA-PH family.

The protein localises to the cytoplasm. The enzyme catalyses 1-(5-phospho-beta-D-ribosyl)-ATP + H2O = 1-(5-phospho-beta-D-ribosyl)-5'-AMP + diphosphate + H(+). The protein operates within amino-acid biosynthesis; L-histidine biosynthesis; L-histidine from 5-phospho-alpha-D-ribose 1-diphosphate: step 2/9. The chain is Phosphoribosyl-ATP pyrophosphatase from Gluconobacter oxydans (strain 621H) (Gluconobacter suboxydans).